Reading from the N-terminus, the 644-residue chain is Exoribonuclease 2 (644 aa).

The RNB domain occupies 189–516; that stretch reads REDLTALNFV…NHRLLKAVIT (328 aa). Residues 561–643 enclose the S1 motif domain; it reads DIRFNAEIID…ETRGIVAKPA (83 aa).

It belongs to the RNR ribonuclease family. RNase II subfamily.

The protein resides in the cytoplasm. It catalyses the reaction Exonucleolytic cleavage in the 3'- to 5'-direction to yield nucleoside 5'-phosphates.. Involved in mRNA degradation. Hydrolyzes single-stranded polyribonucleotides processively in the 3' to 5' direction. The sequence is that of Exoribonuclease 2 from Pectobacterium atrosepticum (strain SCRI 1043 / ATCC BAA-672) (Erwinia carotovora subsp. atroseptica).